We begin with the raw amino-acid sequence, 190 residues long: Ribosome-recycling factor (190 aa).

This sequence belongs to the RRF family.

Its subcellular location is the cytoplasm. Its function is as follows. Responsible for the release of ribosomes from messenger RNA at the termination of protein biosynthesis. May increase the efficiency of translation by recycling ribosomes from one round of translation to another. In Fusobacterium nucleatum subsp. nucleatum (strain ATCC 25586 / DSM 15643 / BCRC 10681 / CIP 101130 / JCM 8532 / KCTC 2640 / LMG 13131 / VPI 4355), this protein is Ribosome-recycling factor.